Here is a 590-residue protein sequence, read N- to C-terminus: MNVYRTHLCNELREEHIDQTVTLSGWVYRKRDHGKIIFVDLRDHYGITQLVFNDSDTTIFQLITTLRLESVITIKGIVKARDSSTINETLDTGSIEVIVSSINIETASDILPINIASMQDYSEDIRLTYRFLDLRRDKVKNNIILRSKVITEIRKSMENMGFIEIQTPILTSSSPEGARDYLVPSRIHHGKFYALPQAPQLFKQLLMVSGFDKYFQIAPCFRDEDARADRSPGEFYQLDIEMSFVTQEDIFNIIEPLMINIFSKFSSKTINKEFPKISYHDAMLYYGSDKPDLRNPLVIQDVTEIFRDSEFKIFNSNIKQGMVVRAIPAPNTAHNPRSFFDSKIEFAKTLGAQGLGYITFIDDSLAKGPIAKFLDKDRLDNIKLICNIKAGDSVFFVSEIADKAALFAGEVRTLLGKELNLIEENTFKFCWVIDFPYFKYDHKEKSINFFHNPFSMPQGGLEALENQDPLNILAYQYDIVCNGIEISSGAIRNHKLNIMYKAFSIAGYTKEMVDEKFKALTRAFKFGAPPHGGIAPGIDRIVMLLADVPNIREVICFPLNQSGEDLLMGSPSEIDNDHLKLLSLNIIKKT.

An L-aspartate-binding site is contributed by glutamate 176. Residues 200–203 (QLFK) form an aspartate region. 2 residues coordinate L-aspartate: arginine 222 and histidine 451. 222–224 (RDE) contacts ATP. Residue glutamate 485 participates in ATP binding. Arginine 492 contributes to the L-aspartate binding site. 537-540 (GIDR) contributes to the ATP binding site.

The protein belongs to the class-II aminoacyl-tRNA synthetase family. Type 1 subfamily. Homodimer.

It localises to the cytoplasm. The enzyme catalyses tRNA(Asx) + L-aspartate + ATP = L-aspartyl-tRNA(Asx) + AMP + diphosphate. In terms of biological role, aspartyl-tRNA synthetase with relaxed tRNA specificity since it is able to aspartylate not only its cognate tRNA(Asp) but also tRNA(Asn). Reaction proceeds in two steps: L-aspartate is first activated by ATP to form Asp-AMP and then transferred to the acceptor end of tRNA(Asp/Asn). This chain is Aspartate--tRNA(Asp/Asn) ligase, found in Ehrlichia ruminantium (strain Gardel).